A 393-amino-acid chain; its full sequence is MQLDSIDTALQALKKGESIIVVDDENRENEGDLVAVTEWMNDNTVNFMATYGKGLICAPISNAIAEKLDLNPMVTHNSDVYGTQFTVSVDHIQTTTGISADERTMTARALIDEQATGSDFNKPGHLFPLIAQDNGVLSRRGHTEASVDLAKLTGAKPAALICEIMDEDGTMAKGASLEAFKETHGLVMISIEDLEKYRKSSISKLDAKAKVKMPTEYGNFDMYGFTTDNSEEDIVVIANGDINKTENVRIHSACLTGDIFHSQRCDCGEQLAASMKYIAEHGGMILYLPQEGRGIGLINKLKAYELIEQGYDTVSANIALGFEEDLRDYQNAAQILKYFGVDSVNLLSNNPKKFESLESYGIHIAKRIELIVPTNAYNQDYMDTKKEKMGHLI.

Positions 1-200 are DHBP synthase; the sequence is MQLDSIDTAL…IEDLEKYRKS (200 aa). D-ribulose 5-phosphate contacts are provided by residues 27–28, aspartate 32, 139–143, and glutamate 163; these read RE and RRGHT. A Mg(2+)-binding site is contributed by glutamate 28. Histidine 142 contributes to the Mg(2+) binding site. The GTP cyclohydrolase II stretch occupies residues 201-393; the sequence is SISKLDAKAK…TKKEKMGHLI (193 aa). Residue 249–253 coordinates GTP; sequence RIHSA. Zn(2+)-binding residues include cysteine 254, cysteine 265, and cysteine 267. Residues glutamine 270, 291–293, and threonine 313 contribute to the GTP site; that span reads EGR. Catalysis depends on aspartate 325, which acts as the Proton acceptor; for GTP cyclohydrolase activity. The active-site Nucleophile; for GTP cyclohydrolase activity is the arginine 327. GTP is bound by residues serine 348 and lysine 353.

In the N-terminal section; belongs to the DHBP synthase family. This sequence in the C-terminal section; belongs to the GTP cyclohydrolase II family. Mg(2+) is required as a cofactor. It depends on Mn(2+) as a cofactor. The cofactor is Zn(2+).

The catalysed reaction is D-ribulose 5-phosphate = (2S)-2-hydroxy-3-oxobutyl phosphate + formate + H(+). It carries out the reaction GTP + 4 H2O = 2,5-diamino-6-hydroxy-4-(5-phosphoribosylamino)-pyrimidine + formate + 2 phosphate + 3 H(+). It functions in the pathway cofactor biosynthesis; riboflavin biosynthesis; 2-hydroxy-3-oxobutyl phosphate from D-ribulose 5-phosphate: step 1/1. It participates in cofactor biosynthesis; riboflavin biosynthesis; 5-amino-6-(D-ribitylamino)uracil from GTP: step 1/4. Functionally, catalyzes the conversion of D-ribulose 5-phosphate to formate and 3,4-dihydroxy-2-butanone 4-phosphate. In terms of biological role, catalyzes the conversion of GTP to 2,5-diamino-6-ribosylamino-4(3H)-pyrimidinone 5'-phosphate (DARP), formate and pyrophosphate. The polypeptide is Riboflavin biosynthesis protein RibBA (Staphylococcus saprophyticus subsp. saprophyticus (strain ATCC 15305 / DSM 20229 / NCIMB 8711 / NCTC 7292 / S-41)).